The following is a 134-amino-acid chain: Translation initiation factor 5A (134 aa).

Lys-36 is modified (hypusine).

This sequence belongs to the eIF-5A family.

Its subcellular location is the cytoplasm. Its function is as follows. Functions by promoting the formation of the first peptide bond. This chain is Translation initiation factor 5A (eIF5A), found in Korarchaeum cryptofilum (strain OPF8).